The primary structure comprises 120 residues: Ribosome-binding factor A (120 aa).

Belongs to the RbfA family. As to quaternary structure, monomer. Binds 30S ribosomal subunits, but not 50S ribosomal subunits or 70S ribosomes.

It localises to the cytoplasm. Its function is as follows. One of several proteins that assist in the late maturation steps of the functional core of the 30S ribosomal subunit. Associates with free 30S ribosomal subunits (but not with 30S subunits that are part of 70S ribosomes or polysomes). Required for efficient processing of 16S rRNA. May interact with the 5'-terminal helix region of 16S rRNA. In Chlamydia abortus (strain DSM 27085 / S26/3) (Chlamydophila abortus), this protein is Ribosome-binding factor A.